A 159-amino-acid chain; its full sequence is Succinate dehydrogenase [ubiquinone] cytochrome b small subunit, mitochondrial (159 aa).

Residues 1–56 (MAVLWRLSAVCGALGGRALLLRTPVVRPAHISAFLQDRPIPEWCGVQHIHLSPSHH) constitute a mitochondrion transit peptide. Topologically, residues 57–63 (SGSKAAS) are mitochondrial matrix. The chain crosses the membrane as a helical span at residues 64 to 85 (LHWTSERVVSVLLLGLLPAAYL). The Mitochondrial intermembrane segment spans residues 86–90 (NPCSA). Residues 91–111 (MDYSLAAALTLHGHWGLGQVV) traverse the membrane as a helical segment. H102 lines the heme b pocket. The Mitochondrial matrix segment spans residues 112–122 (TDYVHGDALQK). Y114 is an a ubiquinone binding site. The chain crosses the membrane as a helical span at residues 123 to 144 (AAKAGLLALSALTFAGLCYFNY). Residues 145–159 (HDVGICKAVAMLWKL) are Mitochondrial intermembrane-facing.

Belongs to the CybS family. As to quaternary structure, component of complex II composed of four subunits: the flavoprotein (FP) SDHA, iron-sulfur protein (IP) SDHB, and a cytochrome b560 composed of SDHC and SDHD.

The protein resides in the mitochondrion inner membrane. It participates in carbohydrate metabolism; tricarboxylic acid cycle. In terms of biological role, membrane-anchoring subunit of succinate dehydrogenase (SDH) that is involved in complex II of the mitochondrial electron transport chain and is responsible for transferring electrons from succinate to ubiquinone (coenzyme Q). SDH also oxidizes malate to the non-canonical enol form of oxaloacetate, enol-oxaloacetate. Enol-oxaloacetate, which is a potent inhibitor of the succinate dehydrogenase activity, is further isomerized into keto-oxaloacetate. This Homo sapiens (Human) protein is Succinate dehydrogenase [ubiquinone] cytochrome b small subunit, mitochondrial (SDHD).